The chain runs to 523 residues: Arabinose import ATP-binding protein AraG (523 aa).

2 consecutive ABC transporter domains span residues 20-255 (LAFR…MVGR) and 268-511 (IGSE…MLRT). 52–59 (GENGAGKS) contacts ATP.

The protein belongs to the ABC transporter superfamily. Arabinose importer (TC 3.A.1.2.2) family. In terms of assembly, the complex is composed of two ATP-binding proteins (AraG), two transmembrane proteins (AraH) and a solute-binding protein (AraF).

The protein localises to the cell inner membrane. The enzyme catalyses L-arabinose(out) + ATP + H2O = L-arabinose(in) + ADP + phosphate + H(+). Part of the ABC transporter complex AraFGH involved in arabinose import. Responsible for energy coupling to the transport system. The sequence is that of Arabinose import ATP-binding protein AraG from Yersinia pestis bv. Antiqua (strain Antiqua).